A 765-amino-acid polypeptide reads, in one-letter code: Transcription factor RFX3 (765 aa).

Residues 189–264 constitute a DNA-binding region (RFX-type winged-helix); that stretch reads HLQWLLDNYE…YHYYGIRVKP (76 aa).

The protein belongs to the RFX family.

Its subcellular location is the nucleus. Functionally, transcription factor required for ciliogenesis and islet cell differentiation during endocrine pancreas development. This Danio rerio (Zebrafish) protein is Transcription factor RFX3 (rfx3).